The chain runs to 575 residues: Arginine--tRNA ligase (575 aa).

The 'HIGH' region motif lies at 122–132 (PNVAKEMHVGH).

Belongs to the class-I aminoacyl-tRNA synthetase family. In terms of assembly, monomer.

Its subcellular location is the cytoplasm. It carries out the reaction tRNA(Arg) + L-arginine + ATP = L-arginyl-tRNA(Arg) + AMP + diphosphate. The sequence is that of Arginine--tRNA ligase from Actinobacillus succinogenes (strain ATCC 55618 / DSM 22257 / CCUG 43843 / 130Z).